The primary structure comprises 187 residues: Large ribosomal subunit protein uL5 (187 aa).

This sequence belongs to the universal ribosomal protein uL5 family. In terms of assembly, part of the 50S ribosomal subunit; part of the 5S rRNA/L5/L18/L25 subcomplex. Contacts the 5S rRNA and the P site tRNA. Forms a bridge to the 30S subunit in the 70S ribosome.

Functionally, this is one of the proteins that bind and probably mediate the attachment of the 5S RNA into the large ribosomal subunit, where it forms part of the central protuberance. In the 70S ribosome it contacts protein S13 of the 30S subunit (bridge B1b), connecting the 2 subunits; this bridge is implicated in subunit movement. Contacts the P site tRNA; the 5S rRNA and some of its associated proteins might help stabilize positioning of ribosome-bound tRNAs. This chain is Large ribosomal subunit protein uL5, found in Dinoroseobacter shibae (strain DSM 16493 / NCIMB 14021 / DFL 12).